A 457-amino-acid polypeptide reads, in one-letter code: Multidrug resistance protein MdtK (457 aa).

12 helical membrane-spanning segments follow: residues 11 to 31, 46 to 66, 93 to 113, 127 to 147, 160 to 180, 188 to 208, 243 to 263, 283 to 301, 316 to 336, 357 to 377, 387 to 407, and 418 to 438; these read LLAL…MGVV, AVAV…GLLL, WLAL…DHVI, AVGF…FQVL, GMVI…IFIY, LGGV…FLMM, LPVA…ALLV, LMFM…RVGF, YTSM…TIVF, LMLL…GSGV, IFFI…YLLG, and PAGF…LMVL.

It belongs to the multi antimicrobial extrusion (MATE) (TC 2.A.66.1) family. MdtK subfamily.

It is found in the cell inner membrane. Multidrug efflux pump that functions probably as a Na(+)/drug antiporter. The chain is Multidrug resistance protein MdtK from Yersinia pseudotuberculosis serotype O:1b (strain IP 31758).